We begin with the raw amino-acid sequence, 372 residues long: Chloromuconate cycloisomerase (372 aa).

The active-site Proton acceptor is the K158. Residues D187, E213, and D238 each coordinate Mn(2+). The Proton donor role is filled by E316.

Belongs to the mandelate racemase/muconate lactonizing enzyme family. Mn(2+) serves as cofactor.

It carries out the reaction 2-[(2R)-2-chloro-2,5-dihydro-5-oxofuryl]acetate = 3-chloro-cis,cis-muconate + H(+). It participates in aromatic compound metabolism; 3-chlorocatechol degradation. This chain is Chloromuconate cycloisomerase (tfdDII), found in Cupriavidus pinatubonensis (strain JMP 134 / LMG 1197) (Cupriavidus necator (strain JMP 134)).